The primary structure comprises 465 residues: Dihydrolipoyl dehydrogenase (465 aa).

FAD-binding positions include 34–42, Lys-51, and Gly-114; that span reads EEREAGGTC. Cysteines 42 and 47 form a disulfide. NAD(+) contacts are provided by residues 180 to 184, Glu-203, Val-237, and 264 to 267; these read GGGVI and SIGR. Asp-307 and Ala-315 together coordinate FAD. His-439 serves as the catalytic Proton acceptor.

This sequence belongs to the class-I pyridine nucleotide-disulfide oxidoreductase family. Requires FAD as cofactor.

It localises to the cytoplasm. The catalysed reaction is N(6)-[(R)-dihydrolipoyl]-L-lysyl-[protein] + NAD(+) = N(6)-[(R)-lipoyl]-L-lysyl-[protein] + NADH + H(+). The branched-chain alpha-keto dehydrogenase complex catalyzes the overall conversion of alpha-keto acids to acyl-CoA and CO(2). It contains multiple copies of 3 enzymatic components: branched-chain alpha-keto acid decarboxylase (E1), lipoamide acyltransferase (E2) and lipoamide dehydrogenase (E3). In Chlamydia muridarum (strain MoPn / Nigg), this protein is Dihydrolipoyl dehydrogenase (lpdA).